We begin with the raw amino-acid sequence, 273 residues long: Trypsin-6 (273 aa).

The first 22 residues, 1–22 (MLSKFTAILLAVHIALFACALT), serve as a signal peptide directing secretion. A propeptide spans 23–46 (QAEKRHKLTRPAFHPNAPYLAGKR) (activation peptide). Residues 47-272 (IVGGFVIDIS…VRDWIRETSG (226 aa)) form the Peptidase S1 domain. Cys-72 and Cys-88 are disulfide-bonded. Active-site charge relay system residues include His-87 and Asp-132. Disulfide bonds link Cys-197/Cys-213 and Cys-224/Cys-248. The Charge relay system role is filled by Ser-228.

Belongs to the peptidase S1 family. As to expression, expressed in the midgut. Expression levels drop a few hours after blood feeding and pick up again 28 hours later.

It is found in the secreted. It carries out the reaction Preferential cleavage: Arg-|-Xaa, Lys-|-Xaa.. Functionally, constitutive trypsin that is expressed 2 days after emergence, coinciding with host seeking behavior of the female. This is Trypsin-6 (TRYP6) from Anopheles gambiae (African malaria mosquito).